A 331-amino-acid chain; its full sequence is UDP-GalNAc:beta-1,3-N-acetylgalactosaminyltransferase 1 (331 aa).

At 1–20 the chain is on the cytoplasmic side; it reads MAPAVLTALPNRMSLRSLKW. A helical; Signal-anchor for type II membrane protein transmembrane segment spans residues 21-43; sequence SLLLLSLLSFLVIWYLSLPHYNV. Residues 44 to 331 lie on the Lumenal side of the membrane; sequence IERVNWMYFY…VMLRNTTCHY (288 aa). Residues N72, N154, N198, N212, and N326 are each glycosylated (N-linked (GlcNAc...) asparagine).

The protein belongs to the glycosyltransferase 31 family. Mg(2+) is required as a cofactor. Detected in brain, ovary, kidney, uterus and stomach. In ovary, specifically expressed in follicular granulosa cells and shows particularly strong expression at later stages of follicle development.

The protein resides in the golgi apparatus membrane. It carries out the reaction a globoside Gb3Cer (d18:1(4E)) + UDP-N-acetyl-alpha-D-galactosamine = a globoside Gb4Cer (d18:1(4E)) + UDP + H(+). The protein operates within protein modification; protein glycosylation. Transfers N-acetylgalactosamine onto globotriaosylceramide. Plays a critical role in preimplantation stage embryonic development. This chain is UDP-GalNAc:beta-1,3-N-acetylgalactosaminyltransferase 1, found in Mus musculus (Mouse).